The sequence spans 624 residues: Pentatricopeptide repeat-containing protein At4g31070, mitochondrial (624 aa).

The transit peptide at 1-15 (MRWVKLGRRVIMSRA) directs the protein to the mitochondrion. PPR repeat units follow at residues 56-91 (FTAILPSVIKACAFQQEPFLLGAQLHCLCLKAGADC), 92-122 (DTVVSNSLISMYAKFSRKYAVRKVFDEMLHR), 123-157 (DTVSYCSIINSCCQDGLLYEAMKLIKEMYFYGFIP), 158-192 (KSELVASLLALCTRMGSSSKVARMFHALVLVDERM), 195-225 (SVLLSTALVDMYLKFDDHAAAFHVFDQMEVK), 226-260 (NEVSWTAMISGCVANQNYEMGVDLFRAMQRENLRP), 261-296 (NRVTLLSVLPACVELNYGSSLVKEIHGFSFRHGCHA), 297-327 (DERLTAAFMTMYCRCGNVSLSRVLFETSKVR), 328-362 (DVVMWSSMISGYAETGDCSEVMNLLNQMRKEGIEA), 363-397 (NSVTLLAIVSACTNSTLLSFASTVHSQILKCGFMS), 398-428 (HILLGNALIDMYAKCGSLSAAREVFYELTEK), 429-463 (DLVSWSSMINAYGLHGHGSEALEIFKGMIKGGHEV), 464-498 (DDMAFLAILSACNHAGLVEEAQTIFTQAGKYHMPV), and 499-529 (TLEHYACYINLLGRFGKIDDAFEVTINMPMK). Residues 534-610 (IWSSLLSACE…CYGFSKIEPE (77 aa)) form a type E motif region.

This sequence belongs to the PPR family. PCMP-E subfamily.

The protein resides in the mitochondrion. The polypeptide is Pentatricopeptide repeat-containing protein At4g31070, mitochondrial (PCMP-E7) (Arabidopsis thaliana (Mouse-ear cress)).